The sequence spans 455 residues: MARPVVAIIGRPNVGKSTLVNRLCHSREAIVHDEPGVTRDRTYQDGYWGDRDFKVVDTGGLVFDDDSEFLPEIREQAALALEEASVALVIVDGQQGVTASDEAIAEFLRGQRCPALLAVNKCESPEQGLAMAAEFWSLGLGEPYPISAIHGAGTAELLDQVLTYLPPKSEEGDSEEPIQLAIIGRPNVGKSSLLNAICGEQRAIVSPIRGTTRDTIDTSLVRENRPWRLVDTAGIRRRRSVNYGPEFFGINRSFKAIERSDVCVLVIDALDGVTEQDQRLAGRIEEDGRACVVVVNKWDAVEKDSHTMTAMEKELRAKLYFLDWAPMLFTSALTGQRVDSIFALAALAVEQHRRRVSTSVVNEVLKEALSWRSPPTTRGGRQGRLYYGTQVASRPPSFTLFVNDPKLFGDTYRRYVERQIREGLGFDGTPLKLFWRGKQQRDAERDLARQQNRQG.

EngA-type G domains follow at residues 4 to 169 (PVVA…PPKS) and 178 to 353 (IQLA…EQHR). GTP contacts are provided by residues 10-17 (GRPNVGKS), 57-61 (DTGGL), 120-123 (NKCE), 184-191 (GRPNVGKS), 231-235 (DTAGI), and 296-299 (NKWD). One can recognise a KH-like domain in the interval 354-439 (RRVSTSVVNE…PLKLFWRGKQ (86 aa)).

It belongs to the TRAFAC class TrmE-Era-EngA-EngB-Septin-like GTPase superfamily. EngA (Der) GTPase family. Associates with the 50S ribosomal subunit.

In terms of biological role, GTPase that plays an essential role in the late steps of ribosome biogenesis. This chain is GTPase Der, found in Synechococcus sp. (strain WH7803).